Consider the following 57-residue polypeptide: Andropin (57 aa).

The N-terminal stretch at 1-23 (MKYFVVLVVLALILAISVGPSDA) is a signal peptide.

Belongs to the andropin family. As to expression, ejaculatory duct of adult males.

Its subcellular location is the secreted. Male-specific peptide with moderate activity against Gram-positive bacteria. This Drosophila melanogaster (Fruit fly) protein is Andropin (Anp).